Reading from the N-terminus, the 411-residue chain is MPSVFWILFDGGGDRPVGGRTPFHTAFKPTIDYLTSLGSCGILDPIAPGVRPGSDTAHLALFGYDPYKYYTGRGAFEALGAGLELKPGDVAFRTNLATIDDNGMVLDRRAGRYITPEEVEAVENLMANIAEDIKRKYGVEIIYKSTVEHRGVLVLRGSVSHKVSDTDPHKVGAKLLESRPLENSKEAVLTAEVINEVTKRFSEVAKDLEINRKRRLEGRLPINAILLRGGGYMPQIEPVRERYNIKAAAIAGVALIRGVARAVGMDVYTARGLGGTKDDMFDEAVRLAVELMGRYDLVFLHVKGTDSASHDGDFKGKVSVIERLDKALTPYLDKLLNNYVVITSDHATPISIKEHTGESVPILLYGPDVVTDDVSKFSELTCWRGALGRIRGIDVMPILGSYLALTEKFGE.

Belongs to the BPG-independent phosphoglycerate mutase family. A-PGAM subfamily.

It catalyses the reaction (2R)-2-phosphoglycerate = (2R)-3-phosphoglycerate. It functions in the pathway carbohydrate degradation; glycolysis; pyruvate from D-glyceraldehyde 3-phosphate: step 3/5. Its function is as follows. Catalyzes the interconversion of 2-phosphoglycerate and 3-phosphoglycerate. The protein is 2,3-bisphosphoglycerate-independent phosphoglycerate mutase of Pyrobaculum islandicum (strain DSM 4184 / JCM 9189 / GEO3).